The sequence spans 78 residues: MGSLSIWHWIVVLAVVLLLFGRGKISDLMGDVAKGIKSFKKGLAEDDEPAKTPAAPPEAPRPLPHQTSSAAEAEKKPV.

The helical transmembrane segment at 1–21 (MGSLSIWHWIVVLAVVLLLFG) threads the bilayer. The tract at residues 43–78 (LAEDDEPAKTPAAPPEAPRPLPHQTSSAAEAEKKPV) is disordered. The segment covering 54–63 (AAPPEAPRPL) has biased composition (pro residues).

The protein belongs to the TatA/E family. The Tat system comprises two distinct complexes: a TatABC complex, containing multiple copies of TatA, TatB and TatC subunits, and a separate TatA complex, containing only TatA subunits. Substrates initially bind to the TatABC complex, which probably triggers association of the separate TatA complex to form the active translocon.

Its subcellular location is the cell inner membrane. Part of the twin-arginine translocation (Tat) system that transports large folded proteins containing a characteristic twin-arginine motif in their signal peptide across membranes. TatA could form the protein-conducting channel of the Tat system. The protein is Sec-independent protein translocase protein TatA of Xanthobacter autotrophicus (strain ATCC BAA-1158 / Py2).